The following is a 107-amino-acid chain: Iron-sulfur cluster assembly protein CyaY (107 aa).

Belongs to the frataxin family.

Involved in iron-sulfur (Fe-S) cluster assembly. May act as a regulator of Fe-S biogenesis. The chain is Iron-sulfur cluster assembly protein CyaY from Neisseria gonorrhoeae (strain ATCC 700825 / FA 1090).